The chain runs to 154 residues: Ribonuclease H (154 aa).

An RNase H type-1 domain is found at E3–V144. The Mg(2+) site is built by D12, E50, D72, and D136.

The protein belongs to the RNase H family. In terms of assembly, monomer. Mg(2+) is required as a cofactor.

Its subcellular location is the cytoplasm. The catalysed reaction is Endonucleolytic cleavage to 5'-phosphomonoester.. Functionally, endonuclease that specifically degrades the RNA of RNA-DNA hybrids. This is Ribonuclease H from Bradyrhizobium diazoefficiens (strain JCM 10833 / BCRC 13528 / IAM 13628 / NBRC 14792 / USDA 110).